We begin with the raw amino-acid sequence, 347 residues long: Ribosomal RNA large subunit methyltransferase M (347 aa).

S-adenosyl-L-methionine-binding positions include Ser-184, 217–220, Asp-236, Asp-256, and Asp-272; that span reads APGG. Residue Lys-301 is the Proton acceptor of the active site.

The protein belongs to the class I-like SAM-binding methyltransferase superfamily. RNA methyltransferase RlmE family. RlmM subfamily. As to quaternary structure, monomer.

It localises to the cytoplasm. It carries out the reaction cytidine(2498) in 23S rRNA + S-adenosyl-L-methionine = 2'-O-methylcytidine(2498) in 23S rRNA + S-adenosyl-L-homocysteine + H(+). In terms of biological role, catalyzes the 2'-O-methylation at nucleotide C2498 in 23S rRNA. The polypeptide is Ribosomal RNA large subunit methyltransferase M (Xanthomonas oryzae pv. oryzae (strain PXO99A)).